Here is a 310-residue protein sequence, read N- to C-terminus: Ribosome production factor 2 homolog (310 aa).

The 211-residue stretch at 29–239 (KKTLILHGTK…VRRHRYPVES (211 aa)) folds into the Brix domain. The interval 281 to 310 (LSNDVKGLKRERREAKKNKDHSKKQKINPE) is disordered. Positions 295-310 (AKKNKDHSKKQKINPE) are enriched in basic residues.

It belongs to the RPF2 family.

It localises to the nucleus. Its subcellular location is the nucleolus. The sequence is that of Ribosome production factor 2 homolog from Oryza sativa subsp. japonica (Rice).